Here is a 353-residue protein sequence, read N- to C-terminus: Uroporphyrinogen decarboxylase (353 aa).

Substrate-binding positions include 25–29 (RQAGR), D74, Y151, S206, and H325.

It belongs to the uroporphyrinogen decarboxylase family. As to quaternary structure, homodimer.

It localises to the cytoplasm. The catalysed reaction is uroporphyrinogen III + 4 H(+) = coproporphyrinogen III + 4 CO2. It functions in the pathway porphyrin-containing compound metabolism; protoporphyrin-IX biosynthesis; coproporphyrinogen-III from 5-aminolevulinate: step 4/4. Functionally, catalyzes the decarboxylation of four acetate groups of uroporphyrinogen-III to yield coproporphyrinogen-III. In Chloroherpeton thalassium (strain ATCC 35110 / GB-78), this protein is Uroporphyrinogen decarboxylase.